Consider the following 1067-residue polypeptide: Dorsal-ventral patterning protein tolloid (1067 aa).

An N-terminal signal peptide occupies residues 1–36; sequence MKGMRLMPMKMKAKLVVLSVGALWMMMFFLVDYAEG. The propeptide occupies 37–136; the sequence is RRLSQLPESE…NGQPIQRRRR (100 aa). The 203-residue stretch at 136–338 folds into the Peptidase M12A domain; sequence RAVTVRKERT…VQANLLYKCA (203 aa). N-linked (GlcNAc...) asparagine glycosylation is present at Asn176. Cystine bridges form between Cys179–Cys337, Cys201–Cys223, Cys203–Cys204, Cys340–Cys390, and Cys417–Cys439. His231 contacts Zn(2+). Residue Glu232 is part of the active site. Positions 235 and 241 each coordinate Zn(2+). 2 consecutive short sequence motifs (cell attachment site) follow at residues 245-247 and 325-327; these read RGD. CUB domains follow at residues 340 to 477 and 478 to 591; these read CGRT…FEVV and CGGD…LMLD. Residue Asn441 is glycosylated (N-linked (GlcNAc...) asparagine). Cystine bridges form between Cys478–Cys505, Cys532–Cys554, Cys595–Cys606, Cys602–Cys615, Cys617–Cys630, and Cys634–Cys662. Asn543 is a glycosylation site (N-linked (GlcNAc...) asparagine). The EGF-like 1; calcium-binding domain maps to 591–631; that stretch reads DVDECKFTDHGCQHLCINTLGSYQCGCRAGYELQANGKTCE. One can recognise a CUB 3 domain in the interval 634 to 753; that stretch reads CGGVVDATKS…SGFVAKFVID (120 aa). N-linked (GlcNAc...) asparagine glycosylation is found at Asn644 and Asn677. Intrachain disulfides connect Cys693-Cys716, Cys757-Cys768, Cys764-Cys777, Cys779-Cys792, Cys797-Cys823, Cys850-Cys872, Cys910-Cys940, and Cys967-Cys989. The region spanning 753-793 is the EGF-like 2; calcium-binding domain; that stretch reads DVDECSMNNGGCQHRCRNTFGSYQCSCRNGYTLAENGHNCT. Asn791 carries an N-linked (GlcNAc...) asparagine glycan. CUB domains follow at residues 797–909 and 910–1026; these read CKFE…FVSE and CGGY…FMAV. N-linked (GlcNAc...) asparagine glycosylation is found at Asn864 and Asn918.

Zn(2+) is required as a cofactor.

Metalloprotease which cleaves TGF-beta family ligands daw, Actbeta and myo in vitro. Cleavage of daw enhances its signaling activity. Cleaves dorsal-ventral patterning protein sog. Processes sog more efficiently than metalloprotease tld which also cleaves sog. Required for normal dorsal development. TLD may interact physically with DPP-C protein. The chain is Dorsal-ventral patterning protein tolloid (tld) from Drosophila melanogaster (Fruit fly).